Consider the following 703-residue polypeptide: Elongation factor G (703 aa).

The tr-type G domain maps to 10-286 (NKVRNIGIMA…AVVKFLPSPL (277 aa)). GTP is bound by residues 19–26 (AHIDAGKT), 83–87 (DTPGH), and 137–140 (NKLD).

Belongs to the TRAFAC class translation factor GTPase superfamily. Classic translation factor GTPase family. EF-G/EF-2 subfamily.

Its subcellular location is the cytoplasm. Catalyzes the GTP-dependent ribosomal translocation step during translation elongation. During this step, the ribosome changes from the pre-translocational (PRE) to the post-translocational (POST) state as the newly formed A-site-bound peptidyl-tRNA and P-site-bound deacylated tRNA move to the P and E sites, respectively. Catalyzes the coordinated movement of the two tRNA molecules, the mRNA and conformational changes in the ribosome. The protein is Elongation factor G of Nocardioides sp. (strain ATCC BAA-499 / JS614).